A 353-amino-acid chain; its full sequence is UPF0283 membrane protein KPK_3110 (353 aa).

A run of 3 helical transmembrane segments spans residues 70 to 90, 99 to 119, and 213 to 233; these read MVSA…VQWT, WIAL…VGSV, and ESTL…FIAW.

It belongs to the UPF0283 family.

The protein localises to the cell inner membrane. The polypeptide is UPF0283 membrane protein KPK_3110 (Klebsiella pneumoniae (strain 342)).